We begin with the raw amino-acid sequence, 419 residues long: Ribosome biogenesis protein WDR12 homolog (419 aa).

The tract at residues 10 to 91 is ubiquitin-like (UBL) domain; the sequence is VQVHLKTKQE…EDAIEIEYVE (82 aa). WD repeat units lie at residues 103 to 141, 142 to 184, 191 to 230, 249 to 287, 289 to 328, 334 to 374, and 378 to 416; these read LHDDWVSAVKASGKWILTGCYDNTLNIWTNKGKHILTIP, GHTA…NTVE, GHERGVDSVSVSPDGQRFATGSWDTMLKVWSAELEDAGEG, GHRESISAVQWMDASTLLTGSWDHTLKVWDLSLEGIKAE, STNKSIFDASYSKLNHLILTASADKNLRLYDSRTNQGSVV, GHNA…APLY, and GHGEKVLDIDWSNPKYIVSGGSDNTVRVFKSRKALVENM.

The protein belongs to the WD repeat WDR12/YTM1 family.

It is found in the nucleus. The protein localises to the nucleolus. Its subcellular location is the nucleoplasm. Its function is as follows. Required for maturation of ribosomal RNAs and formation of the large ribosomal subunit. This chain is Ribosome biogenesis protein WDR12 homolog, found in Drosophila pseudoobscura pseudoobscura (Fruit fly).